Reading from the N-terminus, the 318-residue chain is Protoheme IX farnesyltransferase (318 aa).

The next 9 membrane-spanning stretches (helical) occupy residues 37 to 57 (VMEL…RGLP), 59 to 79 (IWLI…AGAF), 108 to 128 (EALV…WFGA), 131 to 151 (LAGL…TLIL), 158 to 178 (NIVW…AAVT), 183 to 203 (WPAI…YWPL), 216 to 238 (VPML…YTWA), 249 to 269 (LGHA…WFLL), and 296 to 316 (ISYL…GMPL).

It belongs to the UbiA prenyltransferase family. Protoheme IX farnesyltransferase subfamily.

It is found in the cell membrane. It carries out the reaction heme b + (2E,6E)-farnesyl diphosphate + H2O = Fe(II)-heme o + diphosphate. It participates in porphyrin-containing compound metabolism; heme O biosynthesis; heme O from protoheme: step 1/1. Its function is as follows. Converts heme B (protoheme IX) to heme O by substitution of the vinyl group on carbon 2 of heme B porphyrin ring with a hydroxyethyl farnesyl side group. This chain is Protoheme IX farnesyltransferase, found in Renibacterium salmoninarum (strain ATCC 33209 / DSM 20767 / JCM 11484 / NBRC 15589 / NCIMB 2235).